We begin with the raw amino-acid sequence, 131 residues long: D-ribose pyranase (131 aa).

Histidine 20 serves as the catalytic Proton donor. Residues aspartate 28, histidine 98, and 120-122 (YAN) each bind substrate.

Belongs to the RbsD / FucU family. RbsD subfamily. In terms of assembly, homodecamer.

Its subcellular location is the cytoplasm. The catalysed reaction is beta-D-ribopyranose = beta-D-ribofuranose. It participates in carbohydrate metabolism; D-ribose degradation; D-ribose 5-phosphate from beta-D-ribopyranose: step 1/2. Functionally, catalyzes the interconversion of beta-pyran and beta-furan forms of D-ribose. In Clostridium perfringens (strain ATCC 13124 / DSM 756 / JCM 1290 / NCIMB 6125 / NCTC 8237 / Type A), this protein is D-ribose pyranase.